The chain runs to 415 residues: Gamma-glutamyl phosphate reductase (415 aa).

The protein belongs to the gamma-glutamyl phosphate reductase family.

Its subcellular location is the cytoplasm. The catalysed reaction is L-glutamate 5-semialdehyde + phosphate + NADP(+) = L-glutamyl 5-phosphate + NADPH + H(+). It functions in the pathway amino-acid biosynthesis; L-proline biosynthesis; L-glutamate 5-semialdehyde from L-glutamate: step 2/2. Its function is as follows. Catalyzes the NADPH-dependent reduction of L-glutamate 5-phosphate into L-glutamate 5-semialdehyde and phosphate. The product spontaneously undergoes cyclization to form 1-pyrroline-5-carboxylate. In Bacteroides fragilis (strain YCH46), this protein is Gamma-glutamyl phosphate reductase.